Here is an 86-residue protein sequence, read N- to C-terminus: uncharacterized protein (86 aa).

This is an uncharacterized protein from Psittacid herpesvirus 1 (isolate Amazon parrot/-/97-0001/1997) (PsHV-1).